A 573-amino-acid chain; its full sequence is 2-isopropylmalate synthase (573 aa).

Residues 37-314 form the Pyruvate carboxyltransferase domain; the sequence is PRWLSTDLRD…DPQIDFSDID (278 aa). Positions 46, 253, 255, and 289 each coordinate Mg(2+). The interval 456–573 is regulatory domain; sequence NPDNPWGRIQ…VVSAVNRATR (118 aa).

This sequence belongs to the alpha-IPM synthase/homocitrate synthase family. LeuA type 2 subfamily. In terms of assembly, homodimer. Requires Mg(2+) as cofactor.

It is found in the cytoplasm. The catalysed reaction is 3-methyl-2-oxobutanoate + acetyl-CoA + H2O = (2S)-2-isopropylmalate + CoA + H(+). It functions in the pathway amino-acid biosynthesis; L-leucine biosynthesis; L-leucine from 3-methyl-2-oxobutanoate: step 1/4. Its function is as follows. Catalyzes the condensation of the acetyl group of acetyl-CoA with 3-methyl-2-oxobutanoate (2-ketoisovalerate) to form 3-carboxy-3-hydroxy-4-methylpentanoate (2-isopropylmalate). This is 2-isopropylmalate synthase from Streptomyces coelicolor (strain ATCC BAA-471 / A3(2) / M145).